The primary structure comprises 648 residues: Fidgetin-like protein 2 (648 aa).

Residues 1–36 (MHWTPEHAQPLNQWPEQHLDVSSTTPSPAHKLELPP) are disordered. Polar residues predominate over residues 10–27 (PLNQWPEQHLDVSSTTPS). ATP-binding positions include A394 and 434–439 (GCGKAL).

Belongs to the AAA ATPase family. Requires Mg(2+) as cofactor.

It is found in the cytoplasm. The protein resides in the cell cortex. It carries out the reaction ATP + H2O = ADP + phosphate + H(+). Functionally, microtubule-severing enzyme that negatively regulates cell migration and wound healing. In migrating cells, targets dynamic microtubules (MTs) at the leading edge and severs them, thereby suppressing motility. Microtubule severing releases ARHGEF2 which activates RHOA, which in turn regulates focal ahesion turnover via focal adhesion kinase, as opposed to F-actin polymerization, to suppress cell motility. Negative regulator of axon regeneration that suppresses axonal growth by selectively severing dynamic MTs in the distal axon shaft and growth cone. Contributes to proper cell branching during endothelial and neuronal development. In Rattus norvegicus (Rat), this protein is Fidgetin-like protein 2 (Fignl2).